The chain runs to 358 residues: Peptide chain release factor 1 (358 aa).

Gln-234 is subject to N5-methylglutamine. The disordered stretch occupies residues 283–306 (ERLHSERAGQRKSMVGSGDRSERI).

Belongs to the prokaryotic/mitochondrial release factor family. Methylated by PrmC. Methylation increases the termination efficiency of RF1.

The protein resides in the cytoplasm. Peptide chain release factor 1 directs the termination of translation in response to the peptide chain termination codons UAG and UAA. In Zymomonas mobilis subsp. mobilis (strain ATCC 31821 / ZM4 / CP4), this protein is Peptide chain release factor 1.